An 849-amino-acid chain; its full sequence is Formin-like protein 4 (849 aa).

The first 22 residues, 1-22, serve as a signal peptide directing secretion; the sequence is MPPTLALLLFLALSAVAAVGGA. The disordered stretch occupies residues 36–104; sequence IEWTPPPSTA…RARGGGGGGT (69 aa). A compositionally biased stretch (pro residues) spans 38–52; it reads WTPPPSTASPSPPSP. Residues 53–64 are compositionally biased toward low complexity; it reads DFSSDPSTPATP. A helical transmembrane segment spans residues 109 to 129; the sequence is IVVASAAAAAVLALLAFAAAF. A compositionally biased stretch (basic and acidic residues) spans 185-194; that stretch reads ARRGMCRDVD. Residues 185–364 are disordered; the sequence is ARRGMCRDVD…PEPPTGPVSA (180 aa). Gly residues predominate over residues 234-246; the sequence is GSGGGGGGEGGGT. A compositionally biased stretch (low complexity) spans 247-279; that stretch reads WSEASASSPRTTTASRRSLPSLTSDFFPTTPAA. Composition is skewed to pro residues over residues 280–297, 324–339, and 346–360; these read APVP…PPAP, PSNP…PPPS, and PKPP…PPTG. One can recognise an FH2 domain in the interval 406–823; that stretch reads EAAGDEPRPK…SARSFRISAA (418 aa).

This sequence belongs to the formin-like family. Class-I subfamily.

The protein localises to the membrane. The sequence is that of Formin-like protein 4 (FH4) from Oryza sativa subsp. japonica (Rice).